Here is a 351-residue protein sequence, read N- to C-terminus: UDP-3-O-acylglucosamine N-acyltransferase (351 aa).

Residue histidine 239 is the Proton acceptor of the active site.

The protein belongs to the transferase hexapeptide repeat family. LpxD subfamily. As to quaternary structure, homotrimer.

It carries out the reaction a UDP-3-O-[(3R)-3-hydroxyacyl]-alpha-D-glucosamine + a (3R)-hydroxyacyl-[ACP] = a UDP-2-N,3-O-bis[(3R)-3-hydroxyacyl]-alpha-D-glucosamine + holo-[ACP] + H(+). It participates in bacterial outer membrane biogenesis; LPS lipid A biosynthesis. Its function is as follows. Catalyzes the N-acylation of UDP-3-O-acylglucosamine using 3-hydroxyacyl-ACP as the acyl donor. Is involved in the biosynthesis of lipid A, a phosphorylated glycolipid that anchors the lipopolysaccharide to the outer membrane of the cell. This chain is UDP-3-O-acylglucosamine N-acyltransferase, found in Vibrio cholerae serotype O1 (strain ATCC 39315 / El Tor Inaba N16961).